Here is a 351-residue protein sequence, read N- to C-terminus: Phosphate acyltransferase (351 aa).

The protein belongs to the PlsX family. In terms of assembly, homodimer. Probably interacts with PlsY.

The protein localises to the cytoplasm. It carries out the reaction a fatty acyl-[ACP] + phosphate = an acyl phosphate + holo-[ACP]. The protein operates within lipid metabolism; phospholipid metabolism. Catalyzes the reversible formation of acyl-phosphate (acyl-PO(4)) from acyl-[acyl-carrier-protein] (acyl-ACP). This enzyme utilizes acyl-ACP as fatty acyl donor, but not acyl-CoA. This Neisseria meningitidis serogroup C / serotype 2a (strain ATCC 700532 / DSM 15464 / FAM18) protein is Phosphate acyltransferase.